Consider the following 591-residue polypeptide: Probable auxin efflux carrier component 3b (591 aa).

The Extracellular segment spans residues 1–6; sequence MISWHE. The helical transmembrane segment at 7–27 threads the bilayer; that stretch reads LYMVLSAVVPLYVAMMVAYGS. Residues 28–38 are Cytoplasmic-facing; it reads VRWWGVLTPEQ. The chain crosses the membrane as a helical span at residues 39–59; that stretch reads CSGINRFVAVIAVPLLSFHFI. A (indol-3-yl)acetate-binding site is contributed by valine 51. The Extracellular portion of the chain corresponds to 60–70; it reads SSSDPYAMNLR. A helical transmembrane segment spans residues 71-93; sequence FVAADTLQKVLVLAALAAWSRFP. At 94–107 the chain is on the cytoplasmic side; it reads ARFVPPAWPPLDCS. Residues 108–128 traverse the membrane as a helical segment; it reads ITLFSVSTLPNTLVMGIPLLV. (indol-3-yl)acetate contacts are provided by asparagine 118 and leucine 120. The Extracellular portion of the chain corresponds to 129–137; it reads SMYGPYSGD. The chain crosses the membrane as a helical span at residues 138-158; that stretch reads LMVQIVVLQSIVWYTLLLFLF. Tyrosine 151 is a (indol-3-yl)acetate binding site. The Cytoplasmic portion of the chain corresponds to 159-450; that stretch reads EFRAARVLIA…LIRNPNTYAS (292 aa). 2 stretches are compositionally biased toward polar residues: residues 243-254 and 283-292; these read SRNATPRGSTFT and SSSRQHTPRP. Disordered regions lie at residues 243 to 269, 283 to 313, 344 to 374, and 392 to 420; these read SRNA…SALR, SSSR…APTN, ETRR…GERA, and AGAK…RARG. Residues 395 to 407 show a composition bias toward low complexity; the sequence is KTEQQTTAVTTTT. A helical transmembrane segment spans residues 451-471; that stretch reads LIGLTWSLIAFRFHITMPIIV. Over 472-474 the chain is Extracellular; that stretch reads AKS. The helical transmembrane segment at 475 to 495 threads the bilayer; the sequence is ISILSDAGLGMAMFSLGLFMA. Residues 496 to 511 lie on the Cytoplasmic side of the membrane; sequence TQPKIIACGYSVAAAS. The helical transmembrane segment at 512 to 532 threads the bilayer; the sequence is MGVRFFFGPAIMAAASAAVGI. The Extracellular segment spans residues 533–535; it reads RGT. The helical transmembrane segment at 536-556 threads the bilayer; the sequence is LLRIAIVQAALPQGIVPFVFA. The (indol-3-yl)acetate site is built by isoleucine 550 and valine 551. Residues 557-568 lie on the Cytoplasmic side of the membrane; the sequence is KEYNLHATILCT. The helical transmembrane segment at 569 to 589 threads the bilayer; the sequence is LVIFGMLIALPITLVYYIILG. At 590–591 the chain is on the extracellular side; the sequence is LL.

It belongs to the auxin efflux carrier (TC 2.A.69.1) family. As to quaternary structure, homodimer. In terms of tissue distribution, expressed in stem bases and leaves.

The protein resides in the membrane. Functionally, may act as a component of the auxin efflux carrier. The sequence is that of Probable auxin efflux carrier component 3b from Oryza sativa subsp. japonica (Rice).